A 239-amino-acid polypeptide reads, in one-letter code: 1-(5-phosphoribosyl)-5-[(5-phosphoribosylamino)methylideneamino] imidazole-4-carboxamide isomerase (239 aa).

The Proton acceptor role is filled by Asp8. Residue Asp130 is the Proton donor of the active site.

It belongs to the HisA/HisF family.

The protein localises to the cytoplasm. The enzyme catalyses 1-(5-phospho-beta-D-ribosyl)-5-[(5-phospho-beta-D-ribosylamino)methylideneamino]imidazole-4-carboxamide = 5-[(5-phospho-1-deoxy-D-ribulos-1-ylimino)methylamino]-1-(5-phospho-beta-D-ribosyl)imidazole-4-carboxamide. It functions in the pathway amino-acid biosynthesis; L-histidine biosynthesis; L-histidine from 5-phospho-alpha-D-ribose 1-diphosphate: step 4/9. The polypeptide is 1-(5-phosphoribosyl)-5-[(5-phosphoribosylamino)methylideneamino] imidazole-4-carboxamide isomerase (Lachnoclostridium phytofermentans (strain ATCC 700394 / DSM 18823 / ISDg) (Clostridium phytofermentans)).